Here is a 210-residue protein sequence, read N- to C-terminus: Large ribosomal subunit protein uL4 (210 aa).

The disordered stretch occupies residues 46 to 96 (QGNASTKTRAEVRGGGRKPWRQKGTGRARAGSNRSPLWRGGGVIFGPKPRD). Basic residues predominate over residues 60 to 71 (GGRKPWRQKGTG).

The protein belongs to the universal ribosomal protein uL4 family. As to quaternary structure, part of the 50S ribosomal subunit.

In terms of biological role, one of the primary rRNA binding proteins, this protein initially binds near the 5'-end of the 23S rRNA. It is important during the early stages of 50S assembly. It makes multiple contacts with different domains of the 23S rRNA in the assembled 50S subunit and ribosome. Functionally, forms part of the polypeptide exit tunnel. This Gloeothece citriformis (strain PCC 7424) (Cyanothece sp. (strain PCC 7424)) protein is Large ribosomal subunit protein uL4.